The sequence spans 122 residues: UPF0102 protein xcc-b100_3645 (122 aa).

It belongs to the UPF0102 family.

In Xanthomonas campestris pv. campestris (strain B100), this protein is UPF0102 protein xcc-b100_3645.